We begin with the raw amino-acid sequence, 323 residues long: Aldo-keto reductase family 1 member C13 (323 aa).

Residues Gly-20–Tyr-24, Asp-50, and Tyr-55 each bind NAD(+). Catalysis depends on Tyr-55, which acts as the Proton donor. Position 117 (His-117) interacts with substrate. Residues Ser-166–Asn-167, Gln-190, Tyr-216–Tyr-224, and Gln-270–Asn-280 contribute to the NAD(+) site.

It belongs to the aldo/keto reductase family.

Catalyzes the dehydrogenation of 17-beta-hydroxysteroids. May also exhibit significant activity with a variety of cyclic and alicyclic alcohols. Uses both NAD and NADP, but the activity is much greater with NAD than with NADP. The sequence is that of Aldo-keto reductase family 1 member C13 (Akr1c13) from Mus musculus (Mouse).